The following is a 306-amino-acid chain: Protoheme IX farnesyltransferase (306 aa).

A run of 9 helical transmembrane segments spans residues leucine 28–leucine 48, phenylalanine 53–glycine 73, alanine 105–isoleucine 125, isoleucine 127–tryptophan 147, threonine 156–proline 176, alanine 182–isoleucine 202, leucine 227–glutamine 244, leucine 246–isoleucine 266, and phenylalanine 283–isoleucine 303.

Belongs to the UbiA prenyltransferase family. Protoheme IX farnesyltransferase subfamily. In terms of assembly, interacts with CtaA.

It is found in the cell membrane. The enzyme catalyses heme b + (2E,6E)-farnesyl diphosphate + H2O = Fe(II)-heme o + diphosphate. It functions in the pathway porphyrin-containing compound metabolism; heme O biosynthesis; heme O from protoheme: step 1/1. Converts heme B (protoheme IX) to heme O by substitution of the vinyl group on carbon 2 of heme B porphyrin ring with a hydroxyethyl farnesyl side group. The protein is Protoheme IX farnesyltransferase of Macrococcus caseolyticus (strain JCSC5402) (Macrococcoides caseolyticum).